Reading from the N-terminus, the 119-residue chain is Aspartate 1-decarboxylase (119 aa).

S25 functions as the Schiff-base intermediate with substrate; via pyruvic acid in the catalytic mechanism. A Pyruvic acid (Ser) modification is found at S25. T57 provides a ligand contact to substrate. Residue Y58 is the Proton donor of the active site. 73–75 (GAA) lines the substrate pocket.

The protein belongs to the PanD family. In terms of assembly, heterooctamer of four alpha and four beta subunits. Requires pyruvate as cofactor. Post-translationally, is synthesized initially as an inactive proenzyme, which is activated by self-cleavage at a specific serine bond to produce a beta-subunit with a hydroxyl group at its C-terminus and an alpha-subunit with a pyruvoyl group at its N-terminus.

The protein resides in the cytoplasm. The enzyme catalyses L-aspartate + H(+) = beta-alanine + CO2. It participates in cofactor biosynthesis; (R)-pantothenate biosynthesis; beta-alanine from L-aspartate: step 1/1. Its function is as follows. Catalyzes the pyruvoyl-dependent decarboxylation of aspartate to produce beta-alanine. This is Aspartate 1-decarboxylase from Herminiimonas arsenicoxydans.